The sequence spans 744 residues: Deleted in azoospermia protein 1 (744 aa).

A compositionally biased stretch (polar residues) spans 1–10 (MSAANPETPN). Positions 1–27 (MSAANPETPNSTISREASTQSSSAAAS) are disordered. Low complexity predominate over residues 11–27 (STISREASTQSSSAAAS). In terms of domain architecture, RRM 1 spans 40 to 115 (NTVFVGGIDA…KKLKLGPAIR (76 aa)). A compositionally biased stretch (polar residues) spans 163–175 (QHVQSAANPETPN). The disordered stretch occupies residues 163–192 (QHVQSAANPETPNSTISREASTQSSSAAAS). Positions 176–192 (STISREASTQSSSAAAS) are enriched in low complexity. One can recognise an RRM 2 domain in the interval 205 to 280 (NTVFVGGIDA…KKLKLGPAIR (76 aa)). Positions 328–340 (QHVQSAANPETPN) are enriched in polar residues. Positions 328–357 (QHVQSAANPETPNSTISREASTQSSSAAAS) are disordered. Positions 341–357 (STISREASTQSSSAAAS) are enriched in low complexity. Residues 370-445 (NTVFVGGIDA…KKLKLGPAIR (76 aa)) form the RRM 3 domain. 9 consecutive DAZ domains span residues 497–520 (AYSAYPHSPGQVITGCQLLVYNYQ), 521–544 (EYPTYPDSAFQVTTGYQLPVYNYQ), 545–568 (PFPAYPRSPFQVTAGYQLPVYNYQ), 569–592 (AFPAYPNSPFQVATGYQFPVYNYQ), 593–616 (PFPAYPSSPFQVTAGYQLPVYNYQ), 617–640 (AFPAYPNSPFQVATGYQFPVYNYQ), 641–664 (AFPAYPNSPVQVTTGYQLPVYNYQ), 665–688 (AFPAYPSSPFQVTTGYQLPVYNYQ), and 689–712 (AFPAYPNSAVQVTTGYQFHVYNYQ).

Belongs to the RRM DAZ family. As to quaternary structure, forms a heterodimer with BOLL and DAZL. Interacts with PUM2, DAZAP1, DAZAP2, DZIP1 and DZIP3. Testis-specific. Expression restricted to premeiotic germ cells, particularly in spermatogonia (at protein level).

It is found in the cytoplasm. The protein resides in the nucleus. Functionally, RNA-binding protein that plays an essential role in spermatogenesis. May act by binding to the 3'-UTR of mRNAs and regulating their translation. Promotes germ-cell progression to meiosis and formation of haploid germ cells. This is Deleted in azoospermia protein 1 (DAZ1) from Homo sapiens (Human).